Reading from the N-terminus, the 199-residue chain is Ras-related protein Rab-7b (199 aa).

GTP-binding positions include glycine 15–threonine 22, tyrosine 34–threonine 40, aspartate 63–glutamine 67, asparagine 124–aspartate 127, and alanine 154–lysine 155. 2 consecutive short sequence motifs (switch) follow at residues tyrosine 28–leucine 41 and glutamine 67–aspartate 82. Phosphoserine is present on serine 186. Residues cysteine 198 and cysteine 199 are each lipidated (S-geranylgeranyl cysteine).

The protein belongs to the small GTPase superfamily. Rab family. In terms of tissue distribution, expressed in heart, placenta, lung, skeletal muscle and peripheral blood leukocyte.

Its subcellular location is the late endosome. The protein resides in the lysosome. It is found in the golgi apparatus. It localises to the trans-Golgi network. The protein localises to the cytoplasmic vesicle. Its subcellular location is the phagosome. The protein resides in the phagosome membrane. In terms of biological role, controls vesicular trafficking from endosomes to the trans-Golgi network (TGN). Acts as a negative regulator of TLR9 signaling and can suppress TLR9-triggered TNFA, IL6, and IFNB production in macrophages by promoting TLR9 lysosomal degradation. Also negatively regulates TLR4 signaling in macrophages by promoting lysosomal degradation of TLR4. Promotes megakaryocytic differentiation by increasing NF-kappa-B-dependent IL6 production and subsequently enhancing the association of STAT3 with GATA1. Not involved in the regulation of the EGF- and EGFR degradation pathway. This chain is Ras-related protein Rab-7b (RAB7B), found in Homo sapiens (Human).